Here is an 840-residue protein sequence, read N- to C-terminus: Protein argonaute-2 (840 aa).

Positions 210–329 (PVIEFVCEVL…LPLEVCNIVA (120 aa)) constitute a PAZ domain. Ser-368 is subject to Phosphoserine. Positions 498–799 (LVVVILPGKT…VAFRARYHLV (302 aa)) constitute a Piwi domain. Positions 578 and 650 each coordinate a divalent metal cation. A 4-hydroxyproline modification is found at Pro-681. An a divalent metal cation-binding site is contributed by His-788. A phosphoserine mark is found at Ser-805, Ser-809, Ser-812, and Ser-815.

This sequence belongs to the argonaute family. Ago subfamily. In terms of assembly, interacts with DICER1 through its Piwi domain and with TARBP2 during assembly of the RNA-induced silencing complex (RISC). Together, DICER1, AGO2 and TARBP2 constitute the trimeric RISC loading complex (RLC), or micro-RNA (miRNA) loading complex (miRLC). Within the RLC/miRLC, DICER1 and TARBP2 are required to process precursor miRNAs (pre-miRNAs) to mature miRNAs and then load them onto AGO2. AGO2 bound to the mature miRNA constitutes the minimal RISC and may subsequently dissociate from DICER1 and TARBP2. Note however that the term RISC has also been used to describe the trimeric RLC/miRLC. The formation of RISC complexes containing siRNAs rather than miRNAs appears to occur independently of DICER1. Interacts with AGO1. Also interacts with DDB1, DDX5, DDX6, DDX20, DHX30, DHX36, DDX47, DHX9, ELAVL, FXR1, GEMIN4, HNRNPF, IGF2BP1, ILF3, IMP8, MATR3, PABPC1, PRMT5, P4HA1, P4HB, RBM4, SART3, TNRC6A, TNRC6B, UPF1 and YBX1. Interacts with the P-body components DCP1A and XRN1. Associates with polysomes and messenger ribonucleoproteins (mNRPs). Interacts with RBM4; the interaction is modulated under stress-induced conditions, occurs under both cell proliferation and differentiation conditions and in an RNA- and phosphorylation-independent manner. Interacts with LIMD1, WTIP and AJUBA. Interacts with TRIM71; the interaction increases in presence of RNA. Interacts with APOBEC3G in an RNA-dependent manner. Interacts with APOBEC3A, APOBEC3C, APOBEC3F and APOBEC3H. Interacts with DICER1, TARBP2, EIF6, MOV10 and RPL7A (60S ribosome subunit); they form a large RNA-induced silencing complex (RISC). Interacts with FMR1. Interacts with ZFP36. Interacts with RC3H1; the interaction is RNA independent. Found in a complex composed of AGO2, CHD7 and ARB2A. Interacts with SND1 and SYT11. Interacts with CLNK. Interacts with GARRE1. Post-translationally, hydroxylated. 4-hydroxylation appears to enhance protein stability but is not required for miRNA-binding or endonuclease activity. In terms of processing, ubiquitinated on surface-exposed lysines by a SCF-like E3 ubiquitin-protein ligase complex containing ZSWIM8 during target-directed microRNA degradation (TDMD), a process that mediates degradation of microRNAs (miRNAs). Ubiquitination by the SCF-like E3 ubiquitin-protein ligase complex containing ZSWIM8 leads to its subsequent degradation, thereby exposing miRNAs for degradation. ZSWIM8 recognizes and binds AGO2 when it is engaged with a TDMD target. Phosphorylation at Ser-368 by AKT3; leads to up-regulate translational repression of microRNA target and down-regulate endonucleolytic cleavage. Post-translationally, a phosphorylation cycle of C-terminal serine cluster (Ser-805-Ser-815) regulates the release of target mRNAs. Target-binding leads to phosphorylation of these residues by CSNK1A1, which reduces the affinity of AGO2 for mRNA and enables target release. The ANKRD52-PPP6C phosphatase complex dephosphorylates the residues, which primes AGO2 for binding a new target.

The protein localises to the cytoplasm. Its subcellular location is the P-body. It is found in the nucleus. It carries out the reaction Endonucleolytic cleavage to 5'-phosphomonoester.. In terms of biological role, required for RNA-mediated gene silencing (RNAi) by the RNA-induced silencing complex (RISC). The 'minimal RISC' appears to include AGO2 bound to a short guide RNA such as a microRNA (miRNA) or short interfering RNA (siRNA). These guide RNAs direct RISC to complementary mRNAs that are targets for RISC-mediated gene silencing. The precise mechanism of gene silencing depends on the degree of complementarity between the miRNA or siRNA and its target. Binding of RISC to a perfectly complementary mRNA generally results in silencing due to endonucleolytic cleavage of the mRNA specifically by AGO2. Binding of RISC to a partially complementary mRNA results in silencing through inhibition of translation, and this is independent of endonuclease activity. May inhibit translation initiation by binding to the 7-methylguanosine cap, thereby preventing the recruitment of the translation initiation factor eIF4-E. May also inhibit translation initiation via interaction with EIF6, which itself binds to the 60S ribosomal subunit and prevents its association with the 40S ribosomal subunit. The inhibition of translational initiation leads to the accumulation of the affected mRNA in cytoplasmic processing bodies (P-bodies), where mRNA degradation may subsequently occur. In some cases RISC-mediated translational repression is also observed for miRNAs that perfectly match the 3' untranslated region (3'-UTR). Can also up-regulate the translation of specific mRNAs under certain growth conditions. Binds to the AU element of the 3'-UTR of the TNF (TNF-alpha) mRNA and up-regulates translation under conditions of serum starvation. Also required for transcriptional gene silencing (TGS), in which short RNAs known as antigene RNAs or agRNAs direct the transcriptional repression of complementary promoter regions. The polypeptide is Protein argonaute-2 (AGO2) (Oryctolagus cuniculus (Rabbit)).